Reading from the N-terminus, the 81-residue chain is High-potential iron-sulfur protein (81 aa).

4 residues coordinate [4Fe-4S] cluster: Cys-43, Cys-46, Cys-59, and Cys-73.

It belongs to the high-potential iron-sulfur protein (HiPIP) family. As to quaternary structure, homodimer.

The protein resides in the periplasm. Its function is as follows. Specific class of high-redox-potential 4Fe-4S ferredoxins. Functions in anaerobic electron transport in most purple and in some other photosynthetic bacteria and in at least one genus (Paracoccus) of halophilic, denitrifying bacteria. The sequence is that of High-potential iron-sulfur protein from Halochromatium salexigens (Chromatium salexigens).